Consider the following 818-residue polypeptide: Phenylalanine--tRNA ligase beta subunit (818 aa).

The region spanning 39–148 (AAELQKFEVA…EDAVVGENFT (110 aa)) is the tRNA-binding domain. One can recognise a B5 domain in the interval 423–498 (SQKKPLDFSA…RIYGYDKIES (76 aa)). Mg(2+)-binding residues include Asp-476, Asp-482, Glu-485, and Glu-486. The FDX-ACB domain occupies 724–817 (SDFQANFRDY…ISQKFQGTLR (94 aa)).

This sequence belongs to the phenylalanyl-tRNA synthetase beta subunit family. Type 1 subfamily. In terms of assembly, tetramer of two alpha and two beta subunits. Requires Mg(2+) as cofactor.

The protein localises to the cytoplasm. The enzyme catalyses tRNA(Phe) + L-phenylalanine + ATP = L-phenylalanyl-tRNA(Phe) + AMP + diphosphate + H(+). The polypeptide is Phenylalanine--tRNA ligase beta subunit (Rickettsia conorii (strain ATCC VR-613 / Malish 7)).